We begin with the raw amino-acid sequence, 274 residues long: Momilactone A synthase (274 aa).

Belongs to the short-chain dehydrogenases/reductases (SDR) family.

It catalyses the reaction 3beta-hydroxy-9beta-pimara-7,15-dien-19,6beta-olide + NAD(+) = momilactone A + NADH + H(+). The enzyme catalyses 3beta-hydroxy-9beta-pimara-7,15-dien-19,6beta-olide + NADP(+) = momilactone A + NADPH + H(+). Its function is as follows. Involved in momilactone phytoalexins biosynthesis. Catalyzes the last step of momilactone A biosynthesis. This chain is Momilactone A synthase, found in Oryza sativa subsp. japonica (Rice).